A 200-amino-acid polypeptide reads, in one-letter code: Large ribosomal subunit protein uL4 (200 aa).

A disordered region spans residues 43 to 67 (RAQKTRAEVSGSGKKPWRQKGTGRA).

This sequence belongs to the universal ribosomal protein uL4 family. As to quaternary structure, part of the 50S ribosomal subunit.

In terms of biological role, one of the primary rRNA binding proteins, this protein initially binds near the 5'-end of the 23S rRNA. It is important during the early stages of 50S assembly. It makes multiple contacts with different domains of the 23S rRNA in the assembled 50S subunit and ribosome. Forms part of the polypeptide exit tunnel. In Haemophilus influenzae (strain PittEE), this protein is Large ribosomal subunit protein uL4.